A 759-amino-acid polypeptide reads, in one-letter code: Rho GTPase-activating protein 26 (759 aa).

Positions 7-262 (EFSDCYLDSP…MKENPHEHLA (256 aa)) constitute a BAR domain. The 105-residue stretch at 265 to 369 (PYTMEGYLYV…WMEAMDGREP (105 aa)) folds into the PH domain. The Rho-GAP domain occupies 383–568 (AQLDNIGFSI…IIIENYEKMF (186 aa)). The disordered stretch occupies residues 578 to 701 (NSQLHLSRKR…STSSDSSPVS (124 aa)). Over residues 608 to 617 (HNTEKEEKRN) the composition is skewed to basic and acidic residues. The segment covering 618–637 (SVNSSAESVSSSNANSSANS) has biased composition (low complexity). Residues 638-650 (TCTQCSNMNNLNA) are compositionally biased toward polar residues. A compositionally biased stretch (low complexity) spans 679–701 (PMFSAPSSPMPTSSTSSDSSPVS). Residues 701 to 759 (SVPRKAKALYACKAEHDSELSFSAGTVFDNVYPSQEPGWLEGILNGKTGLIPENYVEFL) enclose the SH3 domain.

The protein resides in the cell junction. The protein localises to the focal adhesion. It is found in the cytoplasm. Its subcellular location is the cytoskeleton. It localises to the endosome membrane. GTPase-activating protein for rhoa and cdc42. The chain is Rho GTPase-activating protein 26 (arhgap26) from Xenopus tropicalis (Western clawed frog).